The chain runs to 256 residues: Gramicidin S biosynthesis protein GrsT (256 aa).

The active site involves serine 95.

Belongs to the thioesterase family.

It participates in antibiotic biosynthesis; gramicidin S biosynthesis. In terms of biological role, probable thioesterase involved in the biosynthesis of gramicidin S. This chain is Gramicidin S biosynthesis protein GrsT (grsT), found in Aneurinibacillus migulanus (Bacillus migulanus).